Consider the following 367-residue polypeptide: GPN-loop GTPase 1 (367 aa).

Residues 15–22 (GMAGSGKT) and 18–23 (GSGKTT) contribute to the GTP site. Residues 75-77 (GPN) carry the Gly-Pro-Asn (GPN)-loop; involved in dimer interface motif. A GTP-binding site is contributed by 178–181 (NKCD). A coiled-coil region spans residues 247 to 290 (EGMDDFLEAVKAKVKEYEEEYVPEMERMKEIQRQTKERQKEAQL). The interval 306 to 332 (VGLTVSDAEDEYNGELVDPDEDDGLTA) is disordered. Phosphoserine is present on S311. Acidic residues predominate over residues 312-332 (DAEDEYNGELVDPDEDDGLTA).

Belongs to the GPN-loop GTPase family. In terms of assembly, heterodimers with gpn2 or fet5/gpn3. Binds to RNA polymerase II (RNAPII).

The protein resides in the cytoplasm. Small GTPase required for proper nuclear import of RNA polymerase II (RNAPII). May act at an RNAP assembly step prior to nuclear import. The sequence is that of GPN-loop GTPase 1 from Schizosaccharomyces pombe (strain 972 / ATCC 24843) (Fission yeast).